We begin with the raw amino-acid sequence, 687 residues long: Auxin response factor 14 (687 aa).

The segment at residues 133-235 (FCKTLTASDT…QLRLGVRRAV (103 aa)) is a DNA-binding region (TF-B3).

It belongs to the ARF family. As to quaternary structure, homo and heterodimers. As to expression, expressed in roots, culms, leaves and young panicles.

Its subcellular location is the nucleus. Its function is as follows. Auxin response factors (ARFs) are transcriptional factors that bind specifically to the DNA sequence 5'-TGTCTC-3' found in the auxin-responsive promoter elements (AuxREs). This is Auxin response factor 14 (ARF14) from Oryza sativa subsp. japonica (Rice).